We begin with the raw amino-acid sequence, 163 residues long: NADH-quinone oxidoreductase subunit I (163 aa).

2 consecutive 4Fe-4S ferredoxin-type domains span residues 54-84 and 94-123; these read LRRY…IDSA and TRYD…ETHI. [4Fe-4S] cluster-binding residues include Cys-64, Cys-67, Cys-70, Cys-74, Cys-103, Cys-106, Cys-109, and Cys-113.

It belongs to the complex I 23 kDa subunit family. In terms of assembly, NDH-1 is composed of 14 different subunits. Subunits NuoA, H, J, K, L, M, N constitute the membrane sector of the complex. Requires [4Fe-4S] cluster as cofactor.

The protein resides in the cell inner membrane. It catalyses the reaction a quinone + NADH + 5 H(+)(in) = a quinol + NAD(+) + 4 H(+)(out). In terms of biological role, NDH-1 shuttles electrons from NADH, via FMN and iron-sulfur (Fe-S) centers, to quinones in the respiratory chain. The immediate electron acceptor for the enzyme in this species is believed to be ubiquinone. Couples the redox reaction to proton translocation (for every two electrons transferred, four hydrogen ions are translocated across the cytoplasmic membrane), and thus conserves the redox energy in a proton gradient. This Xanthomonas campestris pv. campestris (strain 8004) protein is NADH-quinone oxidoreductase subunit I.